The chain runs to 431 residues: MNLLIKNVALLSMKEEQPLMENTNIYIEGDTITYIGEINPDIKVDRVIDGTKKIATPGLINAHTHLGMSLLRNYADDVPLFDWLSKHIWPVESKLSAEDVYWGSLLSMIEMIYSGTTTFCDMYFFMDEVAKATEEVGIRGVLTRGIIEESDAEINKEKLRDTRKLYNTWHNKADGRIKVMVGPHAPYTCSSSYLKEVVELAKELNTGIHIHVSETKKEVEESFQKHGKSPVKHLKDIGVFDVPTVAAHCVHVSDEDTEILKEMKVSPVYNPTSNAKLASGFAPVDQMLKKGINVALGTDGPASNNNLNMFEEIHFAATINKALNYDALAVPALEALKMATINGAKALLWDKEIGSIEVGKKADIVIIDIDKPHFYPHHNLISALAYTAQASDVDTVIINGKIIMENREIKTVDVEKVMYNVEKRAKNLIQR.

2 residues coordinate Zn(2+): histidine 63 and histidine 65. Residues glutamate 92, arginine 144, and histidine 184 each coordinate substrate. Histidine 211 provides a ligand contact to Zn(2+). Residues glutamate 214 and aspartate 299 each contribute to the substrate site. Aspartate 299 provides a ligand contact to Zn(2+).

It belongs to the metallo-dependent hydrolases superfamily. MTA/SAH deaminase family. It depends on Zn(2+) as a cofactor.

It carries out the reaction S-adenosyl-L-homocysteine + H2O + H(+) = S-inosyl-L-homocysteine + NH4(+). It catalyses the reaction S-methyl-5'-thioadenosine + H2O + H(+) = S-methyl-5'-thioinosine + NH4(+). Functionally, catalyzes the deamination of 5-methylthioadenosine and S-adenosyl-L-homocysteine into 5-methylthioinosine and S-inosyl-L-homocysteine, respectively. Is also able to deaminate adenosine. The protein is 5-methylthioadenosine/S-adenosylhomocysteine deaminase of Thermoanaerobacter pseudethanolicus (strain ATCC 33223 / 39E) (Clostridium thermohydrosulfuricum).